The chain runs to 179 residues: MAKADKATAVADIAEKFKESTATVVTEYRGLTVSNLAELRRSLGSSTTYTVAKNTLVKRAAAEAGIEGLDELFVGPTAIAFIEGEPVDAAKALKKFAKDNKALVVKGGYMDGRALSVSEVERIADLESREVLLSKFAGALKAKQSQAAALFVAPASQVARLAAALQEKKSAGDSAESAA.

It belongs to the universal ribosomal protein uL10 family. In terms of assembly, part of the ribosomal stalk of the 50S ribosomal subunit. The N-terminus interacts with L11 and the large rRNA to form the base of the stalk. The C-terminus forms an elongated spine to which L12 dimers bind in a sequential fashion forming a multimeric L10(L12)X complex.

In terms of biological role, forms part of the ribosomal stalk, playing a central role in the interaction of the ribosome with GTP-bound translation factors. This chain is Large ribosomal subunit protein uL10, found in Mycolicibacterium gilvum (strain PYR-GCK) (Mycobacterium gilvum (strain PYR-GCK)).